A 1007-amino-acid polypeptide reads, in one-letter code: MEVFPLLLFLSFCWSRTWDLATADSIIHIGAIFDESAKKDDEVFRTAVGDLNQNEEILQTEKITFSVTFVDGNNPFQAVQEACELMNQGILALVSSIGCTSAGSLQSLADAMHIPHLFIQRSTAGTPRSGCGLTRSNRNDDYTLSVRPPVYLNEVILRVVTEYAWQKFIIFYDSEYDIRGIQEFLDKVSQQGMDVALQKVENNINKMITTLFDTMRIEELNRYRDTLRRAILVMNPATAKSFISEVVETNLVAFDCHWIIINEEINDVDVQELVRRSIGRLTIIRQTFPVPQNISQRCFRGNHRISSSLCDPKDPFAQNMEISNLYIYDTVLLLANAFHKKLEDRKWHSMASLSCIRKNSKPWQGGRSMLETIKKGGVNGLTGDLEFGENGGNPNVHFEILGTNYGEELGRGVRKLGCWNPVTGLNGSLTDKKLENNMRGVVLRVVTVLEEPFVMVSENVLGKPKKYQGFSIDVLDALSNYLGFNYEIYVAPDHKYGSPQEDGTWNGLVGELVFKRADIGISALTITPDRENVVDFTTRYMDYSVGVLLRRAEKTVDMFACLAPFDLSLWACIAGTVLLVGLLVYLLNWLNPPRLQMGSMTSTTLYNSMWFVYGSFVQQGGEVPYTTLATRMMMGAWWLFALIVISSYTANLAAFLTITRIESSIQSLQDLSKQTDIPYGTVLDSAVYQHVRMKGLNPFERDSMYSQMWRMINRSNGSENNVLESQAGIQKVKYGNYAFVWDAAVLEYVAINDPDCSFYTVGNTVADRGYGIALQHGSPYRDVFSQRILELQQSGDMDILKHKWWPKNGQCDLYSSVDAKQKGGALDIKSLAGVFCILAAGIVLSCLIAVLETWWSRRKGSRVPSKEDDKEIDLEHLHRRVNSLCTDDDSPHKQFSTSSIDLTPLDIDTLPTRQALEQISDFRNTHITTTTFIPEQIQTLSRTLSAKAASGFAFGSVPEHRTGPFRHRAPNGGFFRSPIKTMSSIPYQPTPTLGLNLGNDPDRGTSI.

Residues methionine 1–alanine 23 form the signal peptide. An interaction with CBLN1 homotrimer region spans residues aspartate 24–arginine 345. At aspartate 24 to aspartate 566 the chain is on the extracellular side. 3 disulfides stabilise this stretch: cysteine 83–cysteine 355, cysteine 99–cysteine 131, and cysteine 298–cysteine 310. An N-linked (GlcNAc...) asparagine glycan is attached at asparagine 293. Residue asparagine 426 is glycosylated (N-linked (GlcNAc...) asparagine). 3 residues coordinate Ca(2+): glutamate 531, valine 534, and aspartate 535. The chain crosses the membrane as a helical span at residues leucine 567–leucine 587. The Cytoplasmic segment spans residues asparagine 588 to glycine 635. The helical transmembrane segment at alanine 636–leucine 656 threads the bilayer. The Extracellular portion of the chain corresponds to threonine 657 to serine 830. N-linked (GlcNAc...) asparagine glycosylation is found at asparagine 713 and asparagine 716. Positions 753, 755, and 757 each coordinate Ca(2+). The chain crosses the membrane as a helical span at residues leucine 831 to leucine 851. Topologically, residues glutamate 852–isoleucine 1007 are cytoplasmic. The residue at position 883 (serine 883) is a Phosphoserine. Threonine 886 bears the Phosphothreonine mark. Serine 890 bears the Phosphoserine mark. The interaction with AP4M1 stretch occupies residues aspartate 921–proline 991. The short motif at threonine 1005–isoleucine 1007 is the PDZ-binding element. Phosphoserine is present on serine 1006.

It belongs to the glutamate-gated ion channel (TC 1.A.10.1) family. GRID2 subfamily. Tetramer; dimer of dimers. Interacts with EML2, MAGI2 (via PDZ domains) and AP4M1. Interacts with BECN1, GOPC, GRID2IP, SHANK1 and SHANK2. Interacts with CBLN2, but not with CBLN4. Interacts with CBLN1 (via C1q domain); the interaction is CBLN1-NRX1 complex formation-dependent; CBLN1-binding is calcium-independent; CBLN1 hexamers anchor GRID2 N-terminal domain dimers to monomeric NRXN1 isoform beta; promotes synaptogenesis and mediates the D-Serine-dependent long term depression signals and AMPA receptor endocytosis. In terms of tissue distribution, expressed selectively in cerebellar Purkinje cells where it is localized in dendritic spines.

The protein localises to the postsynaptic cell membrane. The enzyme catalyses Ca(2+)(in) = Ca(2+)(out). It catalyses the reaction Na(+)(in) = Na(+)(out). Its function is as follows. Member of the ionotropic glutamate receptor family, which plays a crucial role in synaptic organization and signal transduction in the central nervous system. Although it shares structural features with ionotropic glutamate receptors, does not bind glutamate as a primary ligand. Promotes synaptogenesis and mediates the D-Serine-dependent long term depression signals and AMPA receptor endocytosis of cerebellar parallel fiber-Purkinje cell (PF-PC) synapses through the NRX1B-CBLN1-GRID2 triad complex. In the presence of neurexins and cerebellins, forms cation-selective channels that are proposed to be gated by glycine and D-serine. However, recent research disputes this ligand-gated cation channel activity. Cation-selective ion channel activity can be triggered by GRM1 in Purkinje cells. This Mus musculus (Mouse) protein is Glutamate receptor ionotropic, delta-2 (Grid2).